A 493-amino-acid polypeptide reads, in one-letter code: Glutamyl-tRNA(Gln) amidotransferase subunit A (493 aa).

Catalysis depends on charge relay system residues K79 and S159. The active-site Acyl-ester intermediate is S183.

It belongs to the amidase family. GatA subfamily. In terms of assembly, heterotrimer of A, B and C subunits.

The enzyme catalyses L-glutamyl-tRNA(Gln) + L-glutamine + ATP + H2O = L-glutaminyl-tRNA(Gln) + L-glutamate + ADP + phosphate + H(+). Functionally, allows the formation of correctly charged Gln-tRNA(Gln) through the transamidation of misacylated Glu-tRNA(Gln) in organisms which lack glutaminyl-tRNA synthetase. The reaction takes place in the presence of glutamine and ATP through an activated gamma-phospho-Glu-tRNA(Gln). The sequence is that of Glutamyl-tRNA(Gln) amidotransferase subunit A from Brucella canis (strain ATCC 23365 / NCTC 10854 / RM-666).